A 196-amino-acid chain; its full sequence is Carnitine operon protein CaiE (196 aa).

The tract at residues 173–196 (TQPLRQMEENRPRLQGTTDVTPKR) is disordered. Polar residues predominate over residues 187–196 (QGTTDVTPKR).

The protein belongs to the transferase hexapeptide repeat family.

It functions in the pathway amine and polyamine metabolism; carnitine metabolism. Functionally, overproduction of CaiE stimulates the activity of CaiB and CaiD. The sequence is that of Carnitine operon protein CaiE from Escherichia coli O127:H6 (strain E2348/69 / EPEC).